The chain runs to 207 residues: LexA repressor (207 aa).

The H-T-H motif DNA-binding region spans 28–48 (RAEIASRLGFKSANAAEEHLK). Active-site for autocatalytic cleavage activity residues include S124 and K161.

It belongs to the peptidase S24 family. As to quaternary structure, homodimer.

The catalysed reaction is Hydrolysis of Ala-|-Gly bond in repressor LexA.. In terms of biological role, represses a number of genes involved in the response to DNA damage (SOS response), including recA and lexA. In the presence of single-stranded DNA, RecA interacts with LexA causing an autocatalytic cleavage which disrupts the DNA-binding part of LexA, leading to derepression of the SOS regulon and eventually DNA repair. The chain is LexA repressor from Shewanella amazonensis (strain ATCC BAA-1098 / SB2B).